The following is a 77-amino-acid chain: Small ribosomal subunit protein bS20 (77 aa).

The protein belongs to the bacterial ribosomal protein bS20 family.

Functionally, binds directly to 16S ribosomal RNA. This is Small ribosomal subunit protein bS20 from Lactococcus lactis subsp. cremoris (strain MG1363).